The following is a 293-amino-acid chain: Pyridoxal 5'-phosphate synthase subunit PdxS (293 aa).

Aspartate 23 is a D-ribose 5-phosphate binding site. The Schiff-base intermediate with D-ribose 5-phosphate role is filled by lysine 80. Residue glycine 152 participates in D-ribose 5-phosphate binding. Residue arginine 164 participates in D-glyceraldehyde 3-phosphate binding. D-ribose 5-phosphate-binding positions include glycine 213 and 234-235; that span reads GS.

Belongs to the PdxS/SNZ family. In terms of assembly, in the presence of PdxT, forms a dodecamer of heterodimers.

It catalyses the reaction aldehydo-D-ribose 5-phosphate + D-glyceraldehyde 3-phosphate + L-glutamine = pyridoxal 5'-phosphate + L-glutamate + phosphate + 3 H2O + H(+). The protein operates within cofactor biosynthesis; pyridoxal 5'-phosphate biosynthesis. Its function is as follows. Catalyzes the formation of pyridoxal 5'-phosphate from ribose 5-phosphate (RBP), glyceraldehyde 3-phosphate (G3P) and ammonia. The ammonia is provided by the PdxT subunit. Can also use ribulose 5-phosphate and dihydroxyacetone phosphate as substrates, resulting from enzyme-catalyzed isomerization of RBP and G3P, respectively. This chain is Pyridoxal 5'-phosphate synthase subunit PdxS, found in Chloroflexus aggregans (strain MD-66 / DSM 9485).